Consider the following 199-residue polypeptide: Peroxynitrite isomerase (199 aa).

The short motif at 20–26 is the GXWXGXG element; the sequence is GVWEGSG. Positions 158 and 190 each coordinate heme b.

This sequence belongs to the nitrobindin family. In terms of assembly, homodimer. Requires heme b as cofactor.

The enzyme catalyses peroxynitrite = nitrate. Its pathway is nitrogen metabolism. In terms of biological role, heme-binding protein able to scavenge peroxynitrite and to protect free L-tyrosine against peroxynitrite-mediated nitration, by acting as a peroxynitrite isomerase that converts peroxynitrite to nitrate. Therefore, this protein likely plays a role in peroxynitrite sensing and in the detoxification of reactive nitrogen and oxygen species (RNS and ROS, respectively). Is able to bind nitric oxide (NO) in vitro, but may act as a sensor of peroxynitrite levels in vivo. The chain is Peroxynitrite isomerase from Clavibacter sepedonicus (Clavibacter michiganensis subsp. sepedonicus).